The primary structure comprises 196 residues: Large ribosomal subunit protein bL25 (196 aa).

It belongs to the bacterial ribosomal protein bL25 family. CTC subfamily. In terms of assembly, part of the 50S ribosomal subunit; part of the 5S rRNA/L5/L18/L25 subcomplex. Contacts the 5S rRNA. Binds to the 5S rRNA independently of L5 and L18.

In terms of biological role, this is one of the proteins that binds to the 5S RNA in the ribosome where it forms part of the central protuberance. The sequence is that of Large ribosomal subunit protein bL25 from Treponema pallidum subsp. pallidum (strain SS14).